Reading from the N-terminus, the 429-residue chain is 3-phosphoshikimate 1-carboxyvinyltransferase (429 aa).

3-phosphoshikimate contacts are provided by Lys25, Ser26, and Arg30. Lys25 contributes to the phosphoenolpyruvate binding site. The phosphoenolpyruvate site is built by Gly99 and Arg127. Residues Ser173, Ser174, Gln175, Ser201, Asp317, Asn340, and Lys344 each contribute to the 3-phosphoshikimate site. Gln175 is a binding site for phosphoenolpyruvate. Asp317 (proton acceptor) is an active-site residue. The phosphoenolpyruvate site is built by Arg348, Arg390, and Lys415.

It belongs to the EPSP synthase family. Monomer.

It is found in the cytoplasm. The catalysed reaction is 3-phosphoshikimate + phosphoenolpyruvate = 5-O-(1-carboxyvinyl)-3-phosphoshikimate + phosphate. The protein operates within metabolic intermediate biosynthesis; chorismate biosynthesis; chorismate from D-erythrose 4-phosphate and phosphoenolpyruvate: step 6/7. Catalyzes the transfer of the enolpyruvyl moiety of phosphoenolpyruvate (PEP) to the 5-hydroxyl of shikimate-3-phosphate (S3P) to produce enolpyruvyl shikimate-3-phosphate and inorganic phosphate. This Pseudoalteromonas atlantica (strain T6c / ATCC BAA-1087) protein is 3-phosphoshikimate 1-carboxyvinyltransferase.